We begin with the raw amino-acid sequence, 380 residues long: Cytochrome b (380 aa).

4 helical membrane passes run 34–54 (FGSLLAVCLVTQILTGLLLAM), 78–99 (WLIRNLHANGASFFFICIFLHI), 114–134 (WNTGVILLLTLMATAFVGYVL), and 179–199 (FFALHFLLPFVIAGITIIHLT). Heme b contacts are provided by His-84 and His-98. Heme b contacts are provided by His-183 and His-197. An a ubiquinone-binding site is contributed by His-202. A run of 4 helical transmembrane segments spans residues 227 to 247 (IKDILGLTLMFIPFLTLALFS), 289 to 309 (LGGVLALAASVLILLLIPFLH), 321 to 341 (LSQTLFWLLVANLLILTWIGS), and 348 to 368 (FIIIGQMASLSYFSILLILFP).

It belongs to the cytochrome b family. As to quaternary structure, the cytochrome bc1 complex contains 11 subunits: 3 respiratory subunits (MT-CYB, CYC1 and UQCRFS1), 2 core proteins (UQCRC1 and UQCRC2) and 6 low-molecular weight proteins (UQCRH/QCR6, UQCRB/QCR7, UQCRQ/QCR8, UQCR10/QCR9, UQCR11/QCR10 and a cleavage product of UQCRFS1). This cytochrome bc1 complex then forms a dimer. The cofactor is heme b.

The protein resides in the mitochondrion inner membrane. Component of the ubiquinol-cytochrome c reductase complex (complex III or cytochrome b-c1 complex) that is part of the mitochondrial respiratory chain. The b-c1 complex mediates electron transfer from ubiquinol to cytochrome c. Contributes to the generation of a proton gradient across the mitochondrial membrane that is then used for ATP synthesis. This Alectoris chukar (Chukar partridge) protein is Cytochrome b (MT-CYB).